The chain runs to 324 residues: Short-chain dehydrogenase/reductase iacJ (324 aa).

Residues isoleucine 42, lysine 66, aspartate 93, asparagine 120, tyrosine 204, lysine 208, and threonine 239 each coordinate NADP(+). Tyrosine 204 (proton donor) is an active-site residue. Lysine 208 acts as the Lowers pKa of active site Tyr in catalysis.

It belongs to the short-chain dehydrogenases/reductases (SDR) family.

Its pathway is secondary metabolite biosynthesis. Functionally, short-chain dehydrogenase/reductase; part of the gene cluster that mediates the biosynthesis of iso-A82775C, a enylepoxycyclohexane and biosynthetic precursor of the chloropestolide anticancer natural products. Within the cluster, the prenyltransferase iacE prenylates siccayne to generate pestalodiol E, using dimethylallyl diphosphate (DMAPP) as cosubstrate. The probable oxidoreductase iacF is then involved in the epoxidation of pestalodiol F to pestalodiol F, which is further converted to pestalofone A by the short-chain dehydrogenase/reductase iacG. Iso-A82775C is subsequently generated from pestalofone A by the short-chain dehydrogenase/reductase iacC. Iso-A82775C is further condensed with maldoxin via a Diels-Alder reaction to produce the anticancer natural products chloropestolides A to E. This Pestalotiopsis fici (strain W106-1 / CGMCC3.15140) protein is Short-chain dehydrogenase/reductase iacJ.